The sequence spans 99 residues: Small ribosomal subunit protein bS20 (99 aa).

The protein belongs to the bacterial ribosomal protein bS20 family.

Its function is as follows. Binds directly to 16S ribosomal RNA. The chain is Small ribosomal subunit protein bS20 from Caldicellulosiruptor saccharolyticus (strain ATCC 43494 / DSM 8903 / Tp8T 6331).